A 235-amino-acid polypeptide reads, in one-letter code: Replication protein (235 aa).

Tyr149 lines the DNA pocket.

The protein belongs to the Gram-positive plasmids replication protein type 1 family.

Functionally, produces a single-strand nick in a specific site of the plasmid, and this nick results in single-strand replication by rolling circle mechanism. The sequence is that of Replication protein (repB) from Bacillus sp.